We begin with the raw amino-acid sequence, 473 residues long: tRNA modification GTPase MnmE (473 aa).

Arg31, Glu95, and Arg134 together coordinate (6S)-5-formyl-5,6,7,8-tetrahydrofolate. One can recognise a TrmE-type G domain in the interval 230–394 (GVSTVIAGKP…LKQHMGDLVK (165 aa)). GTP-binding positions include 240 to 245 (NAGKST), 259 to 265 (SHMPGTT), and 284 to 287 (DTAG). Residues Ser244 and Thr265 each contribute to the Mg(2+) site. Lys473 provides a ligand contact to (6S)-5-formyl-5,6,7,8-tetrahydrofolate.

It belongs to the TRAFAC class TrmE-Era-EngA-EngB-Septin-like GTPase superfamily. TrmE GTPase family. As to quaternary structure, homodimer. Heterotetramer of two MnmE and two MnmG subunits. It depends on K(+) as a cofactor.

It localises to the cytoplasm. Exhibits a very high intrinsic GTPase hydrolysis rate. Involved in the addition of a carboxymethylaminomethyl (cmnm) group at the wobble position (U34) of certain tRNAs, forming tRNA-cmnm(5)s(2)U34. The protein is tRNA modification GTPase MnmE of Chlorobaculum tepidum (strain ATCC 49652 / DSM 12025 / NBRC 103806 / TLS) (Chlorobium tepidum).